The following is a 307-amino-acid chain: Pantothenate kinase (307 aa).

ATP is bound at residue 90–97 (GSVAVGKS).

Belongs to the prokaryotic pantothenate kinase family.

The protein resides in the cytoplasm. It catalyses the reaction (R)-pantothenate + ATP = (R)-4'-phosphopantothenate + ADP + H(+). The protein operates within cofactor biosynthesis; coenzyme A biosynthesis; CoA from (R)-pantothenate: step 1/5. In Limosilactobacillus fermentum (strain NBRC 3956 / LMG 18251) (Lactobacillus fermentum), this protein is Pantothenate kinase.